Here is a 188-residue protein sequence, read N- to C-terminus: NADH-quinone oxidoreductase subunit I (188 aa).

2 consecutive 4Fe-4S ferredoxin-type domains span residues 44 to 74 (LNRY…VEGA) and 90 to 119 (QVYQ…MTNE). [4Fe-4S] cluster contacts are provided by C54, C57, C60, C64, C99, C102, C105, and C109. The disordered stretch occupies residues 167 to 188 (TGGAAAAAQDESEVDDTAGDRP). Residues 176 to 188 (DESEVDDTAGDRP) are compositionally biased toward acidic residues.

The protein belongs to the complex I 23 kDa subunit family. In terms of assembly, NDH-1 is composed of 14 different subunits. Subunits NuoA, H, J, K, L, M, N constitute the membrane sector of the complex. [4Fe-4S] cluster is required as a cofactor.

It localises to the cell membrane. It carries out the reaction a quinone + NADH + 5 H(+)(in) = a quinol + NAD(+) + 4 H(+)(out). In terms of biological role, NDH-1 shuttles electrons from NADH, via FMN and iron-sulfur (Fe-S) centers, to quinones in the respiratory chain. The immediate electron acceptor for the enzyme in this species is believed to be ubiquinone. Couples the redox reaction to proton translocation (for every two electrons transferred, four hydrogen ions are translocated across the cytoplasmic membrane), and thus conserves the redox energy in a proton gradient. This Rhodococcus jostii (strain RHA1) protein is NADH-quinone oxidoreductase subunit I.